Consider the following 293-residue polypeptide: Small ribosomal subunit biogenesis GTPase RsgA 2 (293 aa).

Residues 63-223 (SNELVRPPIA…VADTPGFSVL (161 aa)) form the CP-type G domain. GTP contacts are provided by residues 112-115 (TKVD) and 166-174 (GQSGVGKSS). Zn(2+)-binding residues include Cys247, Cys252, His254, and Cys260.

Belongs to the TRAFAC class YlqF/YawG GTPase family. RsgA subfamily. Monomer. Associates with 30S ribosomal subunit, binds 16S rRNA. The cofactor is Zn(2+).

The protein resides in the cytoplasm. In terms of biological role, one of several proteins that assist in the late maturation steps of the functional core of the 30S ribosomal subunit. Helps release RbfA from mature subunits. May play a role in the assembly of ribosomal proteins into the subunit. Circularly permuted GTPase that catalyzes slow GTP hydrolysis, GTPase activity is stimulated by the 30S ribosomal subunit. In Oceanobacillus iheyensis (strain DSM 14371 / CIP 107618 / JCM 11309 / KCTC 3954 / HTE831), this protein is Small ribosomal subunit biogenesis GTPase RsgA 2.